The chain runs to 154 residues: Large ribosomal subunit protein uL13 (154 aa).

It belongs to the universal ribosomal protein uL13 family. Part of the 50S ribosomal subunit.

In terms of biological role, this protein is one of the early assembly proteins of the 50S ribosomal subunit, although it is not seen to bind rRNA by itself. It is important during the early stages of 50S assembly. The polypeptide is Large ribosomal subunit protein uL13 (Bradyrhizobium diazoefficiens (strain JCM 10833 / BCRC 13528 / IAM 13628 / NBRC 14792 / USDA 110)).